The sequence spans 210 residues: Inner membrane-spanning protein YciB (210 aa).

Helical transmembrane passes span 19-39 (LVLELGPLMVFFFANSRGDWL), 53-73 (IFIATGLFMAATATALIVSWI), 78-98 (LPMMPLISGIVVFVFGALTLW), 115-135 (LFGAILLGGLLFGKSLLGYVF), 148-168 (KLTIRWGVFFLFLAVLNEIVW), and 175-195 (FWVAFKVWGTMPITILFTLAQ).

This sequence belongs to the YciB family.

Its subcellular location is the cell inner membrane. Its function is as follows. Plays a role in cell envelope biogenesis, maintenance of cell envelope integrity and membrane homeostasis. The protein is Inner membrane-spanning protein YciB of Sinorhizobium fredii (strain NBRC 101917 / NGR234).